A 390-amino-acid chain; its full sequence is Transforming protein cbl (390 aa).

The interval 1–52 (ASAGGGCRRGPSFSPGSIPSLAAERAPDPPLAMAGNVKKSSGAGGGGSGGSG) is disordered. Positions 42-52 (GAGGGGSGGSG) are enriched in gly residues. The segment at 77 to 205 (PPCTVDKKMV…KGIFPSGLFQ (129 aa)) is 4H. In terms of domain architecture, Cbl-PTB spans 77 to 381 (PPCTVDKKMV…GRNQNPDLTG (305 aa)). Residues 206 to 278 (GDTFRITKAD…FEFDIFTRLF (73 aa)) are EF-hand-like. Ca(2+) is bound by residues aspartate 259, threonine 261, asparagine 263, tyrosine 265, and glutamate 270. Positions 279–381 (QPWSSLLRNW…GRNQNPDLTG (103 aa)) are SH2-like. Arginine 324 serves as a coordination point for 4-O-phospho-L-tyrosine.

Functionally, induces early B-lineage lymphomas. This Mus musculus (Mouse) protein is Transforming protein cbl (V-CBL).